Here is a 407-residue protein sequence, read N- to C-terminus: Protein COS9 (407 aa).

A run of 3 helical transmembrane segments spans residues 75–95, 98–118, and 261–281; these read TWLL…IKSI, IFPF…LPNI, and IFNL…YVSW.

It belongs to the DUP/COS family.

The protein resides in the membrane. This is Protein COS9 (COS9) from Saccharomyces cerevisiae (strain ATCC 204508 / S288c) (Baker's yeast).